Reading from the N-terminus, the 386-residue chain is uncharacterized protein (386 aa).

It belongs to the TelA family.

This is an uncharacterized protein from Bacillus subtilis (strain 168).